The chain runs to 383 residues: Lipid-A-disaccharide synthase (383 aa).

Belongs to the LpxB family.

The catalysed reaction is a lipid X + a UDP-2-N,3-O-bis[(3R)-3-hydroxyacyl]-alpha-D-glucosamine = a lipid A disaccharide + UDP + H(+). It participates in bacterial outer membrane biogenesis; LPS lipid A biosynthesis. In terms of biological role, condensation of UDP-2,3-diacylglucosamine and 2,3-diacylglucosamine-1-phosphate to form lipid A disaccharide, a precursor of lipid A, a phosphorylated glycolipid that anchors the lipopolysaccharide to the outer membrane of the cell. This Aliivibrio fischeri (strain MJ11) (Vibrio fischeri) protein is Lipid-A-disaccharide synthase.